A 130-amino-acid polypeptide reads, in one-letter code: Con-Ins G2 (130 aa).

The signal sequence occupies residues Met-1 to Thr-24. Cystine bridges form between Cys-29–Cys-100, Cys-41–Cys-103, Cys-53–Cys-116, and Cys-102–Cys-107. 4-hydroxyproline; partial is present on Pro-34. Residues Glu-54–Ser-74 form a disordered region. Residues Arg-59–Arg-92 constitute a propeptide, c peptide. Position 111 is a 4-carboxyglutamate; partial (Glu-111).

This sequence belongs to the insulin family. As to quaternary structure, heterodimer of A and B chains; disulfide-linked. In terms of tissue distribution, expressed by the venom gland.

Its subcellular location is the secreted. This venom insulin, from a fish-hunting cone snail, facilitates prey capture by rapidly inducing hypoglycemic shock. Intraperitoneal injection of this peptide into zebrafish lowers blood glucose with the same potency than human insulin. In vivo, when applied to water, this peptide reduces overall locomotor activity of zebrafish larvae, observed as a significant decrease in the percentage of time spent swimming and movement frequency. This Conus geographus (Geography cone) protein is Con-Ins G2.